Reading from the N-terminus, the 288-residue chain is 2-hydroxy-6-oxononadienedioate/2-hydroxy-6-oxononatrienedioate hydrolase (288 aa).

Catalysis depends on His-267, which acts as the Proton acceptor.

Belongs to the AB hydrolase superfamily. MhpC family. Homodimer.

The catalysed reaction is (2Z,4E)-2-hydroxy-6-oxonona-2,4-dienedioate + H2O = (2Z)-2-hydroxypenta-2,4-dienoate + succinate + H(+). It catalyses the reaction (2Z,4E,7E)-2-hydroxy-6-oxonona-2,4,7-trienedioate + H2O = (2Z)-2-hydroxypenta-2,4-dienoate + fumarate + H(+). Its pathway is aromatic compound metabolism; 3-phenylpropanoate degradation. In terms of biological role, catalyzes the cleavage of the C5-C6 bond of 2-hydroxy-6-oxononadienedioate and 2-hydroxy-6-oxononatrienedioate, a dienol ring fission product of the bacterial meta-cleavage pathway for degradation of phenylpropionic acid. The chain is 2-hydroxy-6-oxononadienedioate/2-hydroxy-6-oxononatrienedioate hydrolase from Escherichia coli (strain K12 / DH10B).